An 83-amino-acid polypeptide reads, in one-letter code: Putative defensin-like protein 257 (83 aa).

Positions 1 to 25 (MMNVSLKLSFLVFILVIMSNLGSEA) are cleaved as a signal peptide. 3 cysteine pairs are disulfide-bonded: Cys57-Cys73, Cys63-Cys80, and Cys67-Cys82.

This sequence belongs to the DEFL family.

It is found in the secreted. The sequence is that of Putative defensin-like protein 257 from Arabidopsis thaliana (Mouse-ear cress).